Here is a 94-residue protein sequence, read N- to C-terminus: Integration host factor subunit beta (94 aa).

The protein belongs to the bacterial histone-like protein family. As to quaternary structure, heterodimer of an alpha and a beta chain.

This protein is one of the two subunits of integration host factor, a specific DNA-binding protein that functions in genetic recombination as well as in transcriptional and translational control. The chain is Integration host factor subunit beta from Pectobacterium atrosepticum (strain SCRI 1043 / ATCC BAA-672) (Erwinia carotovora subsp. atroseptica).